The sequence spans 522 residues: Target of rapamycin complex 2 subunit MAPKAP1 (522 aa).

Ala2 is modified (N-acetylalanine). The segment at 2–184 (AFLDNPTIIL…KKIDVYLPLH (183 aa)) is interaction with MAP3K2. Residues 2-267 (AFLDNPTIIL…GFSTLALVEK (266 aa)) form an interaction with NBN region. Residue Thr86 is modified to Phosphothreonine. Phosphoserine occurs at positions 128, 186, 315, and 356. The 129-residue stretch at 139-267 (QSILSVRLEQ…GFSTLALVEK (129 aa)) folds into the CRIM domain. Residues 279–353 (LFVRINAAHG…QSAWEFCLVR (75 aa)) are SIN1-type RBD. The SIN1-type PH domain maps to 382–487 (HYKSFKVSMI…IVLKVNYILE (106 aa)). Arg393 lines the a 1,2-diacyl-sn-glycero-3-phospho-(1D-myo-inositol-3,4,5-trisphosphate) pocket. Thr398 carries the phosphothreonine modification. Residues Lys428 and Lys464 each coordinate a 1,2-diacyl-sn-glycero-3-phospho-(1D-myo-inositol-3,4,5-trisphosphate). Positions 468 to 522 (FESDAATVNEIVLKVNYILESRASTARADYFAQKQRKLNRRTSFSFQKEKKSGQQ) are interaction with ATF2. Position 510 is a phosphoserine (Ser510).

Belongs to the SIN1 family. As to quaternary structure, component of the mechanistic target of rapamycin complex 2 (mTORC2), consisting in two heterotretramers composed of MTOR, MLST8, RICTOR and MAPKAP1/SIN1. The mTORC2 core complex associates with PRR5/PROTOR1 and/or PRR5L/PROTOR2. Contrary to mTORC1, mTORC2 does not bind to and is not sensitive to FKBP12-rapamycin. Interacts with MAP3K2. Interacts with ATF2. Interacts with MAPK8. Interacts with GTP-bound HRAS and KRAS; inhibiting their activity. Interacts with IFNAR2. In terms of processing, phosphorylation at Ser-128 by PKC promotes relocalization to the perinuclear region, where the mTORC2 complex specifically mediates phosphorylation of SGK1. Phosphorylated at Thr-86 by AKT1 or RPS6KB1 in the presence of growth factors; the effect of this phosphorylation is however unclear. According to two studies, phosphorylation at Thr-86 by AKT1 is part of a positive feedback loop that increases mTORC2 activation. According to another study, phosphorylation at Thr-86 and Thr-398 by RPS6KB1 promotes dissociation from the mTORC2 complex, leading to inhibit mTORC2 signaling.

It localises to the cell membrane. Its subcellular location is the endoplasmic reticulum membrane. It is found in the early endosome membrane. The protein resides in the late endosome membrane. The protein localises to the lysosome membrane. It localises to the golgi apparatus membrane. Its subcellular location is the mitochondrion outer membrane. It is found in the cytoplasm. The protein resides in the perinuclear region. The protein localises to the nucleus. Its activity is regulated as follows. Phosphatidylinositol 3,4,5-trisphosphate (PI(3,4,5)P3) promotes MTOR activation by relieving MAPKAP1/SIN1-mediated inhibition of MTOR that takes place in absence of PI(3,4,5)P3. Functionally, component of the mechanistic target of rapamycin complex 2 (mTORC2), which transduces signals from growth factors to pathways involved in proliferation, cytoskeletal organization, lipogenesis and anabolic output. In response to growth factors, mTORC2 phosphorylates and activates AGC protein kinase family members, including AKT (AKT1, AKT2 and AKT3), PKC (PRKCA, PRKCB and PRKCE) and SGK1. In contrast to mTORC1, mTORC2 is nutrient-insensitive. Within the mTORC2 complex, MAPKAP1/SIN1 acts as a substrate adapter which recognizes and binds AGC protein kinase family members for phosphorylation by MTOR. mTORC2 plays a critical role in AKT1 activation by mediating phosphorylation of different sites depending on the context, such as 'Thr-450', 'Ser-473', 'Ser-477' or 'Thr-479', facilitating the phosphorylation of the activation loop of AKT1 on 'Thr-308' by PDPK1/PDK1 which is a prerequisite for full activation. mTORC2 catalyzes the phosphorylation of SGK1 at 'Ser-422' and of PRKCA on 'Ser-657'. The mTORC2 complex also phosphorylates various proteins involved in insulin signaling, such as FBXW8 and IGF2BP1. mTORC2 acts upstream of Rho GTPases to regulate the actin cytoskeleton, probably by activating one or more Rho-type guanine nucleotide exchange factors. mTORC2 promotes the serum-induced formation of stress-fibers or F-actin. MAPKAP1 inhibits MAP3K2 by preventing its dimerization and autophosphorylation. Inhibits HRAS and KRAS independently of mTORC2 complex. Enhances osmotic stress-induced phosphorylation of ATF2 and ATF2-mediated transcription. Involved in ciliogenesis, regulates cilia length through its interaction with CCDC28B independently of mTORC2 complex. This Bos taurus (Bovine) protein is Target of rapamycin complex 2 subunit MAPKAP1 (MAPKAP1).